A 261-amino-acid chain; its full sequence is tRNA U34 carboxymethyltransferase (261 aa).

Carboxy-S-adenosyl-L-methionine is bound by residues Lys-25, Trp-39, Lys-44, Gly-63, 114–115 (VE), Tyr-135, and Arg-250.

This sequence belongs to the class I-like SAM-binding methyltransferase superfamily. CmoB family. Homotetramer.

It catalyses the reaction carboxy-S-adenosyl-L-methionine + 5-hydroxyuridine(34) in tRNA = 5-carboxymethoxyuridine(34) in tRNA + S-adenosyl-L-homocysteine + H(+). Its function is as follows. Catalyzes carboxymethyl transfer from carboxy-S-adenosyl-L-methionine (Cx-SAM) to 5-hydroxyuridine (ho5U) to form 5-carboxymethoxyuridine (cmo5U) at position 34 in tRNAs. This is tRNA U34 carboxymethyltransferase from Helicobacter pylori (strain ATCC 700392 / 26695) (Campylobacter pylori).